We begin with the raw amino-acid sequence, 188 residues long: Ribosome-recycling factor (188 aa).

The protein belongs to the RRF family.

It localises to the cytoplasm. Functionally, responsible for the release of ribosomes from messenger RNA at the termination of protein biosynthesis. May increase the efficiency of translation by recycling ribosomes from one round of translation to another. The polypeptide is Ribosome-recycling factor (Gluconacetobacter diazotrophicus (strain ATCC 49037 / DSM 5601 / CCUG 37298 / CIP 103539 / LMG 7603 / PAl5)).